Consider the following 89-residue polypeptide: Exodeoxyribonuclease 7 small subunit (89 aa).

Positions 1-22 are disordered; the sequence is MRKKSSSNKEETALHPPPENFE.

It belongs to the XseB family. As to quaternary structure, heterooligomer composed of large and small subunits.

It is found in the cytoplasm. The catalysed reaction is Exonucleolytic cleavage in either 5'- to 3'- or 3'- to 5'-direction to yield nucleoside 5'-phosphates.. Its function is as follows. Bidirectionally degrades single-stranded DNA into large acid-insoluble oligonucleotides, which are then degraded further into small acid-soluble oligonucleotides. This chain is Exodeoxyribonuclease 7 small subunit, found in Nitrosomonas europaea (strain ATCC 19718 / CIP 103999 / KCTC 2705 / NBRC 14298).